A 1611-amino-acid chain; its full sequence is Pentafunctional AROM polypeptide (1611 aa).

The 3-dehydroquinate synthase stretch occupies residues 1–406 (MSQVSGGKVP…VEERASTVSD (406 aa)). NAD(+)-binding positions include 64–66 (DTN), 97–100 (EESK), 128–130 (GGV), and D133. Position 144 (R144) interacts with 7-phospho-2-dehydro-3-deoxy-D-arabino-heptonate. 153-154 (TT) lines the NAD(+) pocket. Residues D160 and K166 each contribute to the 7-phospho-2-dehydro-3-deoxy-D-arabino-heptonate site. K175 lines the NAD(+) pocket. N176 contributes to the 7-phospho-2-dehydro-3-deoxy-D-arabino-heptonate binding site. NAD(+) contacts are provided by residues 193 to 196 (WLLT) and N204. Residue E208 participates in Zn(2+) binding. 7-phospho-2-dehydro-3-deoxy-D-arabino-heptonate-binding positions include 208-211 (EVIK) and K272. The active-site Proton acceptor; for 3-dehydroquinate synthase activity is the E282. 7-phospho-2-dehydro-3-deoxy-D-arabino-heptonate-binding positions include 286–290 (RNLVN) and H293. H293 contacts Zn(2+). The active-site Proton acceptor; for 3-dehydroquinate synthase activity is H297. 7-phospho-2-dehydro-3-deoxy-D-arabino-heptonate is bound by residues H309 and K378. Position 309 (H309) interacts with Zn(2+). The EPSP synthase stretch occupies residues 419 to 882 (VRESVSAPRP…WDVLGGPLNV (464 aa)). Catalysis depends on C864, which acts as the For EPSP synthase activity. The shikimate kinase stretch occupies residues 915–1092 (DASIVLIGMR…VPISPAFFLS (178 aa)). ATP is bound at residue 922 to 929 (GMRASGKS). Residues 1093-1309 (LTFPRVQDAW…AAPGQMSVRD (217 aa)) are 3-dehydroquinase. H1212 serves as the catalytic Proton acceptor; for 3-dehydroquinate dehydratase activity. Catalysis depends on K1240, which acts as the Schiff-base intermediate with substrate; for 3-dehydroquinate dehydratase activity. Positions 1322-1611 (KRHFFLFGSP…AAYRAAAASM (290 aa)) are shikimate dehydrogenase.

It in the N-terminal section; belongs to the sugar phosphate cyclases superfamily. Dehydroquinate synthase family. This sequence in the 2nd section; belongs to the EPSP synthase family. The protein in the 3rd section; belongs to the shikimate kinase family. In the 4th section; belongs to the type-I 3-dehydroquinase family. It in the C-terminal section; belongs to the shikimate dehydrogenase family. Homodimer. It depends on Zn(2+) as a cofactor.

The protein localises to the cytoplasm. The catalysed reaction is 7-phospho-2-dehydro-3-deoxy-D-arabino-heptonate = 3-dehydroquinate + phosphate. The enzyme catalyses 3-dehydroquinate = 3-dehydroshikimate + H2O. It carries out the reaction shikimate + NADP(+) = 3-dehydroshikimate + NADPH + H(+). It catalyses the reaction shikimate + ATP = 3-phosphoshikimate + ADP + H(+). The catalysed reaction is 3-phosphoshikimate + phosphoenolpyruvate = 5-O-(1-carboxyvinyl)-3-phosphoshikimate + phosphate. It participates in metabolic intermediate biosynthesis; chorismate biosynthesis; chorismate from D-erythrose 4-phosphate and phosphoenolpyruvate: step 2/7. Its pathway is metabolic intermediate biosynthesis; chorismate biosynthesis; chorismate from D-erythrose 4-phosphate and phosphoenolpyruvate: step 3/7. It functions in the pathway metabolic intermediate biosynthesis; chorismate biosynthesis; chorismate from D-erythrose 4-phosphate and phosphoenolpyruvate: step 4/7. The protein operates within metabolic intermediate biosynthesis; chorismate biosynthesis; chorismate from D-erythrose 4-phosphate and phosphoenolpyruvate: step 5/7. It participates in metabolic intermediate biosynthesis; chorismate biosynthesis; chorismate from D-erythrose 4-phosphate and phosphoenolpyruvate: step 6/7. Its function is as follows. The AROM polypeptide catalyzes 5 consecutive enzymatic reactions in prechorismate polyaromatic amino acid biosynthesis. The polypeptide is Pentafunctional AROM polypeptide (Malassezia globosa (strain ATCC MYA-4612 / CBS 7966) (Dandruff-associated fungus)).